The sequence spans 434 residues: SPARC-related modular calcium-binding protein 1 (434 aa).

The N-terminal stretch at 1-26 is a signal peptide; that stretch reads MLPARCARLLTPHLLLVLVQLSPARG. In terms of domain architecture, Kazal-like spans 37-89; sequence SDRDPQCNLHCSRTQPKPICASDGRSYESMCEYQRAKCRDPTLGVVHRGRCKD. 6 disulfide bridges follow: Cys-43/Cys-74, Cys-47/Cys-67, Cys-56/Cys-87, Cys-95/Cys-118, Cys-129/Cys-136, and Cys-138/Cys-158. Residues 92-158 enclose the Thyroglobulin type-1 1 domain; sequence QSKCRLERAQ…SSVQNKTPVC (67 aa). Residues 149–172 show a composition bias toward polar residues; sequence SSVQNKTPVCSGSVTDKPLSQGNS. The segment at 149 to 191 is disordered; it reads SSVQNKTPVCSGSVTDKPLSQGNSGRKDDGSKPTPTMETQPVF. A glycan (N-linked (GlcNAc...) asparagine) is linked at Asn-214. The Thyroglobulin type-1 2 domain maps to 224 to 292; sequence VYSCDQERQS…TSTRYVMPSC (69 aa). Intrachain disulfides connect Cys-227/Cys-251, Cys-262/Cys-269, and Cys-271/Cys-292. EF-hand domains are found at residues 359–394 and 396–431; these read LEERVVHWYFSQLDSNSSNDINKREMKPFKRYVKKK and KPKKCARRFTDYCDLNKDKVISLPELKGCLGVSKEG. Positions 372, 374, 376, 378, 383, 409, 411, 413, and 420 each coordinate Ca(2+). Asn-374 carries an N-linked (GlcNAc...) asparagine glycan.

In terms of processing, glycosylated. Widely expressed in many tissues with a strongest signal in ovary. No expression in spleen.

The protein localises to the secreted. It localises to the extracellular space. The protein resides in the extracellular matrix. Its subcellular location is the basement membrane. Plays essential roles in both eye and limb development. Probable regulator of osteoblast differentiation. This Homo sapiens (Human) protein is SPARC-related modular calcium-binding protein 1 (SMOC1).